We begin with the raw amino-acid sequence, 432 residues long: MHDYVTWLRHASPYINAHRDRTFVVMLPGEGIAHPNFANIVHDLVLLHSLGVRLVLVHGSRPQIEARLAARGLTPHFHRDLRITDAPTLECVIDAVGQLRIAIEARLSMDMAASPMQGSRLRLTSGNFVTARPIGVLDGVDYHHTGEVRRIDRKGINRQLDERSIVLLSPLGYSPTGEIFNLACEDVATRAAIDLGADKLLLFGAEDGLLDEHGQLVRELRPQQVPAHLARLGSNYQGELLDAAAQACRGGVGRSHIVSYATDGALLSELFTRTGNGTLVAQEQFESLREATIEDVGGLIELISPLEEQGILVRRSREVLEREIEQFSIVEREGLIIACAALYPIADSDCGELACLAVNPDYRHGGRGDELLARIEARARAQGLKTLFVLTTRTAHWFRERGFEPSSVERMPAARASLYNYQRNSKVFEKAL.

The N-acetyltransferase domain maps to 286–425 (ESLREATIED…ASLYNYQRNS (140 aa)).

This sequence belongs to the acetyltransferase family. ArgA subfamily.

The protein localises to the cytoplasm. It catalyses the reaction L-glutamate + acetyl-CoA = N-acetyl-L-glutamate + CoA + H(+). It functions in the pathway amino-acid biosynthesis; L-arginine biosynthesis; N(2)-acetyl-L-ornithine from L-glutamate: step 1/4. The polypeptide is Amino-acid acetyltransferase (Ectopseudomonas mendocina (strain ymp) (Pseudomonas mendocina)).